The primary structure comprises 204 residues: FMN-dependent NADH:quinone oxidoreductase (204 aa).

FMN contacts are provided by residues S9 and 15-17 (SAS).

The protein belongs to the azoreductase type 1 family. In terms of assembly, homodimer. Requires FMN as cofactor.

The catalysed reaction is 2 a quinone + NADH + H(+) = 2 a 1,4-benzosemiquinone + NAD(+). It catalyses the reaction N,N-dimethyl-1,4-phenylenediamine + anthranilate + 2 NAD(+) = 2-(4-dimethylaminophenyl)diazenylbenzoate + 2 NADH + 2 H(+). Functionally, quinone reductase that provides resistance to thiol-specific stress caused by electrophilic quinones. In terms of biological role, also exhibits azoreductase activity. Catalyzes the reductive cleavage of the azo bond in aromatic azo compounds to the corresponding amines. In Xanthomonas campestris pv. campestris (strain ATCC 33913 / DSM 3586 / NCPPB 528 / LMG 568 / P 25), this protein is FMN-dependent NADH:quinone oxidoreductase.